The sequence spans 539 residues: GMP synthase [glutamine-hydrolyzing] (539 aa).

Residues 4–202 (KILILDFGSQ…VLQIAGCKPD (199 aa)) form the Glutamine amidotransferase type-1 domain. C81 functions as the Nucleophile in the catalytic mechanism. Catalysis depends on residues H176 and E178. Residues 203–395 (WVMRDHIEEA…LGLPPEMVYR (193 aa)) form the GMPS ATP-PPase domain. An ATP-binding site is contributed by 230–236 (SGGVDSS).

As to quaternary structure, homodimer.

The catalysed reaction is XMP + L-glutamine + ATP + H2O = GMP + L-glutamate + AMP + diphosphate + 2 H(+). Its pathway is purine metabolism; GMP biosynthesis; GMP from XMP (L-Gln route): step 1/1. Its function is as follows. Catalyzes the synthesis of GMP from XMP. This chain is GMP synthase [glutamine-hydrolyzing], found in Cupriavidus taiwanensis (strain DSM 17343 / BCRC 17206 / CCUG 44338 / CIP 107171 / LMG 19424 / R1) (Ralstonia taiwanensis (strain LMG 19424)).